The primary structure comprises 188 residues: Elongation factor P (188 aa).

The residue at position 34 (Lys-34) is an N6-(3,6-diaminohexanoyl)-5-hydroxylysine.

It belongs to the elongation factor P family. Post-translationally, may be beta-lysylated on the epsilon-amino group of Lys-34 by the combined action of EpmA and EpmB, and then hydroxylated on the C5 position of the same residue by EpmC (if this protein is present). Lysylation is critical for the stimulatory effect of EF-P on peptide-bond formation. The lysylation moiety may extend toward the peptidyltransferase center and stabilize the terminal 3-CCA end of the tRNA. Hydroxylation of the C5 position on Lys-34 may allow additional potential stabilizing hydrogen-bond interactions with the P-tRNA.

The protein resides in the cytoplasm. It participates in protein biosynthesis; polypeptide chain elongation. In terms of biological role, involved in peptide bond synthesis. Alleviates ribosome stalling that occurs when 3 or more consecutive Pro residues or the sequence PPG is present in a protein, possibly by augmenting the peptidyl transferase activity of the ribosome. Modification of Lys-34 is required for alleviation. The chain is Elongation factor P from Stenotrophomonas maltophilia (strain K279a).